Here is a 635-residue protein sequence, read N- to C-terminus: Probable clathrin assembly protein At4g32285 (635 aa).

In terms of domain architecture, ENTH spans 23–159 (VASNMAPDLE…ELALFERRGR (137 aa)). The segment at 157 to 208 (RGRNGGGSSSSHQSNGDDGYNRSRDDFRSPPPRTYDYETGNGFGMPKRSRSF) is disordered. Low complexity predominate over residues 165 to 174 (SSSHQSNGDD). Residues 175–184 (GYNRSRDDFR) are compositionally biased toward basic and acidic residues. A Phosphoserine modification is found at serine 207. Position 224 is a phosphothreonine (threonine 224). Residues 357-369 (AKRAKSPERKEIE) show a composition bias toward basic and acidic residues. The segment at 357–412 (AKRAKSPERKEIEAPPAPAPPVEEPVDMNEIKALPPPENHTPPPPPAPEPKPQQPQ) is disordered. A compositionally biased stretch (pro residues) spans 390–409 (LPPPENHTPPPPPAPEPKPQ).

The protein localises to the membrane. The protein resides in the clathrin-coated pit. It is found in the golgi apparatus. It localises to the cytoplasmic vesicle. Its subcellular location is the clathrin-coated vesicle. This is Probable clathrin assembly protein At4g32285 from Arabidopsis thaliana (Mouse-ear cress).